The primary structure comprises 1787 residues: ATP-dependent RNA helicase DEAH11, chloroplastic (1787 aa).

The transit peptide at 1–33 (MRNSFPPSDGGRSTTDRRQQSFPSSSTNRYNSR) directs the protein to the chloroplast. The disordered stretch occupies residues 1-75 (MRNSFPPSDG…DRAPSSGFSP (75 aa)). Positions 20 to 60 (QSFPSSSTNRYNSRSAQSSPPLNHCTTWNQQHSQYHNTNFP) are enriched in polar residues. Residues 313–477 (LKKIHCEQIM…LFDCGILHVN (165 aa)) form the Helicase ATP-binding domain. ATP is bound at residue 326–333 (GETGSGKS). Residues 424-427 (DEAH) carry the DEAH box motif. One can recognise a Helicase C-terminal domain in the interval 507–673 (DVVKMAVEIH…VALLRMLALG (167 aa)). The segment at 1557–1764 (IELECPICLS…EPCYAHLRTI (208 aa)) is TRIAD supradomain. The Zn(2+) site is built by cysteine 1561, cysteine 1564, cysteine 1577, histidine 1579, cysteine 1582, cysteine 1585, cysteine 1604, cysteine 1609, cysteine 1649, cysteine 1654, cysteine 1672, cysteine 1675, cysteine 1680, cysteine 1683, histidine 1688, cysteine 1693, cysteine 1719, and cysteine 1722. The RING-type 1 zinc finger occupies 1561 to 1609 (CPICLSEVDDGYSLEGCSHLFCKACLLEQFEASMRNFDAFPILCSHIDC). The segment at 1628 to 1693 (DELISASLSA…HLEYHPLITC (66 aa)) adopts an IBR-type zinc-finger fold. An RING-type 2; atypical zinc finger spans residues 1719 to 1747 (CPICKSTIEKTDGCNHLQCRCGKHICWTC). The active site involves cysteine 1732. Cysteine 1737 and cysteine 1739 together coordinate Zn(2+).

It belongs to the DEAD box helicase family. DEAH subfamily.

The protein localises to the plastid. It is found in the chloroplast. The catalysed reaction is ATP + H2O = ADP + phosphate + H(+). The protein is ATP-dependent RNA helicase DEAH11, chloroplastic of Arabidopsis thaliana (Mouse-ear cress).